Reading from the N-terminus, the 417-residue chain is MSLSKKLTLDKLDVKGKRVIMRVDFNVPMKRNQVTNNQRIKASLPSIRYCLDNGARSVVLMSHLGRPDGVAMPDKYSLEPVAAELKSLLGKDVLFLKDCVGSEAEQACANPPAGSVILLENLRFHVEEEGKGQDPSGNKLKAEPDKVEAFRASLSKLGDVYVNDAFGTAHRAHSSMVGVNLPQKASGFLMKKELDYFAKALENPERPFLAILGGAKVADKIQLIKNMLDKVNEMIIGGGMAFTFLKVLNNMEIGASLFDKEGATIVKEIMAKAEKNRVNITFPVDFVIADKFEENAKVGQATVASGIPAGWVALDCGPETNKKYAQVVARAKLIVWNGPLGVFEWDAFANGTKALMDEIVKATSKGCITIIGGGDTATCCAKWNTEDKVSHVSTGGGASLELLEGKVLPGVEALSNL.

Position 2 is an N-acetylserine (serine 2). Phosphoserine is present on residues serine 2 and serine 4. An N6-acetyllysine modification is found at lysine 11. (2R)-3-phosphoglycerate is bound by residues valine 23, aspartate 24, phenylalanine 25, asparagine 26, glutamine 38, arginine 39, serine 62, histidine 63, glycine 65, and arginine 66. 3 positions are modified to N6-acetyllysine: lysine 75, lysine 86, and lysine 97. Residues leucine 122 and arginine 123 each coordinate (2R)-3-phosphoglycerate. Residues lysine 131 and lysine 146 each carry the N6-acetyllysine modification. (2R)-3-phosphoglycerate-binding residues include histidine 170 and arginine 171. At tyrosine 196 the chain carries Phosphotyrosine. Lysine 199 carries the N6-acetyllysine modification. Glycine 214 provides a ligand contact to ADP. Glycine 214 is a CDP binding site. Positions 215 and 216 each coordinate AMP. An ATP-binding site is contributed by alanine 215. Residue alanine 215 coordinates Mg(2+). Residues alanine 218 and aspartate 219 each coordinate Mg(2+). Aspartate 219 contacts CDP. Lysine 220 contributes to the AMP binding site. Lysine 220 contacts ATP. Glycine 238 contacts ADP. Glycine 238 contributes to the CDP binding site. AMP is bound at residue glycine 239. Glycine 239 contributes to the ATP binding site. Lysine 267 and lysine 291 each carry N6-acetyllysine. Alanine 313 provides a ligand contact to AMP. Alanine 313 provides a ligand contact to ATP. 2 residues coordinate CDP: glycine 338 and phenylalanine 343. ADP is bound at residue phenylalanine 343. Residue glutamate 344 coordinates AMP. Positions 344, 375, and 376 each coordinate ATP. Residue aspartate 375 coordinates Mg(2+).

Belongs to the phosphoglycerate kinase family. Monomer. It depends on Mg(2+) as a cofactor. As to expression, testis specific.

The protein resides in the cytoplasm. The enzyme catalyses (2R)-3-phosphoglycerate + ATP = (2R)-3-phospho-glyceroyl phosphate + ADP. It functions in the pathway carbohydrate degradation; glycolysis; pyruvate from D-glyceraldehyde 3-phosphate: step 2/5. Functionally, essential for sperm motility and male fertility but is not required for the completion of spermatogenesis. This is Phosphoglycerate kinase 2 from Sus scrofa (Pig).